The primary structure comprises 100 residues: Succinate dehydrogenase subunit 7B, mitochondrial (100 aa).

Positions Met1–Ala25 are disordered. A mitochondrion-targeting transit peptide spans Met1 to Gly32. Low complexity predominate over residues Ser9–Ser19.

In terms of assembly, component of complex II composed of eight subunits in plants: four classical SDH subunits SDH1, SDH2, SDH3 and SDH4 (a flavoprotein (FP), an iron-sulfur protein (IP), and a cytochrome b composed of a large and a small subunit.), as well as four subunits unknown in mitochondria from bacteria and heterotrophic eukaryotes.

It is found in the mitochondrion inner membrane. The protein operates within carbohydrate metabolism; tricarboxylic acid cycle. This is Succinate dehydrogenase subunit 7B, mitochondrial from Arabidopsis thaliana (Mouse-ear cress).